The sequence spans 268 residues: Putative ABC transporter ATP-binding protein LMOf2365_1216 (268 aa).

In terms of domain architecture, ABC transporter spans Leu-2–Val-237. ATP is bound at residue Gly-35 to Ser-42.

It belongs to the ABC transporter superfamily.

The protein localises to the cell membrane. Probably part of an ABC transporter complex. Responsible for energy coupling to the transport system. The chain is Putative ABC transporter ATP-binding protein LMOf2365_1216 from Listeria monocytogenes serotype 4b (strain F2365).